Reading from the N-terminus, the 82-residue chain is MIKLRLKKYGKKREVSYRIVAINSASRRDGRPLEELGFYNPRTDETRLNVPAIVTRLKQGAQPTETVRSILEKAKVFEQVNG.

It belongs to the bacterial ribosomal protein bS16 family.

The polypeptide is Small ribosomal subunit protein bS16 (Crocosphaera subtropica (strain ATCC 51142 / BH68) (Cyanothece sp. (strain ATCC 51142))).